Here is a 119-residue protein sequence, read N- to C-terminus: Protein phosphatase EYA4 (119 aa).

This sequence belongs to the HAD-like hydrolase superfamily. EYA family. The cofactor is Mg(2+).

The protein resides in the cytoplasm. The protein localises to the nucleus. The catalysed reaction is O-phospho-L-tyrosyl-[protein] + H2O = L-tyrosyl-[protein] + phosphate. Tyrosine phosphatase that specifically dephosphorylates 'Tyr-142' of histone H2AX (H2AXY142ph). 'Tyr-142' phosphorylation of histone H2AX plays a central role in DNA repair and acts as a mark that distinguishes between apoptotic and repair responses to genotoxic stress. Promotes efficient DNA repair by dephosphorylating H2AX, promoting the recruitment of DNA repair complexes containing MDC1. Its function as histone phosphatase probably explains its role in transcription regulation during organogenesis. May be involved in development of the eye. This Gallus gallus (Chicken) protein is Protein phosphatase EYA4 (EYA4).